Consider the following 219-residue polypeptide: Large ribosomal subunit protein bL25 (219 aa).

Residues 195–219 form a disordered region; the sequence is EETTTTETSNEPEVIKKGKKEEEEK. The span at 197–206 shows a compositional bias: low complexity; that stretch reads TTTTETSNEP. Residues 207–219 show a composition bias toward basic and acidic residues; the sequence is EVIKKGKKEEEEK.

It belongs to the bacterial ribosomal protein bL25 family. CTC subfamily. As to quaternary structure, part of the 50S ribosomal subunit; part of the 5S rRNA/L5/L18/L25 subcomplex. Contacts the 5S rRNA. Binds to the 5S rRNA independently of L5 and L18.

In terms of biological role, this is one of the proteins that binds to the 5S RNA in the ribosome where it forms part of the central protuberance. The sequence is that of Large ribosomal subunit protein bL25 from Fervidobacterium nodosum (strain ATCC 35602 / DSM 5306 / Rt17-B1).